Here is a 150-residue protein sequence, read N- to C-terminus: Large ribosomal subunit protein bL9 (150 aa).

Belongs to the bacterial ribosomal protein bL9 family.

In terms of biological role, binds to the 23S rRNA. The protein is Large ribosomal subunit protein bL9 of Paraburkholderia phytofirmans (strain DSM 17436 / LMG 22146 / PsJN) (Burkholderia phytofirmans).